The primary structure comprises 316 residues: Vacuolar membrane protein YNL058C (316 aa).

Residues lysine 32–alanine 60 are disordered. Residues valine 93–leucine 113 traverse the membrane as a helical segment. Residues serine 148, serine 256, and serine 276 each carry the phosphoserine modification. The disordered stretch occupies residues glutamate 240 to methionine 304. Residues serine 256–histidine 271 show a composition bias toward basic and acidic residues.

It belongs to the PRM5 family.

The protein localises to the vacuole membrane. This is Vacuolar membrane protein YNL058C from Saccharomyces cerevisiae (strain ATCC 204508 / S288c) (Baker's yeast).